The sequence spans 470 residues: Pyruvate kinase I (470 aa).

Arg32 is a binding site for substrate. K(+)-binding residues include Asn34, Ser36, Asp66, and Thr67. 34–37 (NFSH) contributes to the ATP binding site. Residues Arg73 and Lys156 each coordinate ATP. Glu222 provides a ligand contact to Mg(2+). Positions 245, 246, and 278 each coordinate substrate. A Mg(2+)-binding site is contributed by Asp246.

This sequence belongs to the pyruvate kinase family. As to quaternary structure, homotetramer. Mg(2+) is required as a cofactor. Requires K(+) as cofactor.

It carries out the reaction pyruvate + ATP = phosphoenolpyruvate + ADP + H(+). It participates in carbohydrate degradation; glycolysis; pyruvate from D-glyceraldehyde 3-phosphate: step 5/5. This Salmonella typhi protein is Pyruvate kinase I (pykF).